The chain runs to 336 residues: Syntaxin-31 (336 aa).

The Cytoplasmic portion of the chain corresponds to 1–314; that stretch reads MGSTFRDRTV…QHLTRISSNR (314 aa). Disordered stretches follow at residues 23 to 53 and 152 to 218; these read GAIPSVHQDEDDPASSKRSSPGSEFNKKASR and RSEN…SQLR. Over residues 154-163 the composition is skewed to basic and acidic residues; it reads ENMKAHENRK. Positions 164-181 are enriched in polar residues; it reads QLFSTKNAVDSPPQNNAK. Over residues 190 to 202 the composition is skewed to low complexity; that stretch reads SSSSNPFGNLQQP. Positions 244–306 constitute a t-SNARE coiled-coil homology domain; the sequence is ENYSQSRAVA…EGARSALLQH (63 aa). Residues 315-335 traverse the membrane as a helical; Anchor for type IV membrane protein segment; it reads WLMMKIFAVIILFLIVFLFFV. Residue A336 is a topological domain, vesicular.

Belongs to the syntaxin family. Part of the t-SNARE complex. Interacts with CDC48A, but not with VPS45.

It localises to the golgi apparatus. Its subcellular location is the cis-Golgi network membrane. The protein resides in the cytoplasm. The protein localises to the endosome. Its function is as follows. Vesicle trafficking protein that functions in the secretory pathway. This chain is Syntaxin-31 (SYP31), found in Arabidopsis thaliana (Mouse-ear cress).